The sequence spans 243 residues: DNA repair protein RecO (243 aa).

Belongs to the RecO family.

Involved in DNA repair and RecF pathway recombination. This chain is DNA repair protein RecO, found in Caulobacter vibrioides (strain NA1000 / CB15N) (Caulobacter crescentus).